Reading from the N-terminus, the 270-residue chain is Cbp/p300-interacting transactivator 2 (270 aa).

Residues 138 to 201 (LHPAAGHQMN…SGGGSGSGNM (64 aa)) form a disordered region. Residues 165–198 (STPGGSGGSSTPGGSGSSSGGGAGSSNSGGGSGS) are compositionally biased toward gly residues.

Belongs to the CITED family. Interacts (via C-terminus) with SMAD2. Interacts (via C-terminus) with SMAD3 (via MH2 domain). Interacts with LHX2 (via LIM domains). Interacts with WT1. Interacts (via C-terminus) with EP300 (via CH1 domain); the interaction is stimulated in response to hypoxia. Interacts with PPARA. Interacts (via C-terminus) with TFAP2A, TFAP2B and TFAP2C.

The protein resides in the nucleus. Transcriptional coactivator of the p300/CBP-mediated transcription complex. Acts as a bridge, linking TFAP2 transcription factors and the p300/CBP transcriptional coactivator complex in order to stimulate TFAP2-mediated transcriptional activation. Positively regulates TGF-beta signaling through its association with the SMAD/p300/CBP-mediated transcriptional coactivator complex. Stimulates the peroxisome proliferator-activated receptors PPARA transcriptional activity. Enhances estrogen-dependent transactivation mediated by estrogen receptors. Also acts as a transcriptional corepressor; interferes with the binding of the transcription factors HIF1A or STAT2 and the p300/CBP transcriptional coactivator complex. Participates in sex determination and early gonad development by stimulating transcription activation of SRY. Plays a role in controlling left-right patterning during embryogenesis; potentiates transcriptional activation of NODAL-mediated gene transcription in the left lateral plate mesoderm (LPM). Plays an essential role in differentiation of the adrenal cortex from the adrenogonadal primordium (AGP); stimulates WT1-mediated transcription activation thereby up-regulating the nuclear hormone receptor NR5A1 promoter activity. Associates with chromatin to the PITX2 P1 promoter region. In Homo sapiens (Human), this protein is Cbp/p300-interacting transactivator 2 (CITED2).